An 85-amino-acid chain; its full sequence is LYR motif-containing protein 5A (85 aa).

Belongs to the complex I LYR family.

This chain is LYR motif-containing protein 5A (lyrm5a), found in Danio rerio (Zebrafish).